The following is a 383-amino-acid chain: 1-deoxy-D-xylulose 5-phosphate reductoisomerase (383 aa).

Threonine 10, glycine 11, serine 12, isoleucine 13, glycine 36, lysine 37, asparagine 38, and asparagine 122 together coordinate NADPH. Lysine 123 serves as a coordination point for 1-deoxy-D-xylulose 5-phosphate. Glutamate 124 contributes to the NADPH binding site. Aspartate 148 lines the Mn(2+) pocket. Residues serine 149, glutamate 150, serine 174, and histidine 197 each contribute to the 1-deoxy-D-xylulose 5-phosphate site. Glutamate 150 is a binding site for Mn(2+). Glycine 203 is an NADPH binding site. Residues serine 210, asparagine 215, lysine 216, and glutamate 219 each coordinate 1-deoxy-D-xylulose 5-phosphate. Position 219 (glutamate 219) interacts with Mn(2+).

The protein belongs to the DXR family. Requires Mg(2+) as cofactor. The cofactor is Mn(2+).

It catalyses the reaction 2-C-methyl-D-erythritol 4-phosphate + NADP(+) = 1-deoxy-D-xylulose 5-phosphate + NADPH + H(+). Its pathway is isoprenoid biosynthesis; isopentenyl diphosphate biosynthesis via DXP pathway; isopentenyl diphosphate from 1-deoxy-D-xylulose 5-phosphate: step 1/6. Catalyzes the NADPH-dependent rearrangement and reduction of 1-deoxy-D-xylulose-5-phosphate (DXP) to 2-C-methyl-D-erythritol 4-phosphate (MEP). This chain is 1-deoxy-D-xylulose 5-phosphate reductoisomerase, found in Bacillus velezensis (strain DSM 23117 / BGSC 10A6 / LMG 26770 / FZB42) (Bacillus amyloliquefaciens subsp. plantarum).